The sequence spans 505 residues: Flagellin (505 aa).

The protein belongs to the bacterial flagellin family.

Its subcellular location is the secreted. The protein resides in the bacterial flagellum. Its function is as follows. Flagellin is the subunit protein which polymerizes to form the filaments of bacterial flagella. The chain is Flagellin (fliC) from Salmonella rostock.